The sequence spans 37 residues: uncharacterized protein (37 aa).

A helical transmembrane segment spans residues 1–21 (MQDLEIFLSIFAFIFVFYFGA).

The protein resides in the endoplasmic reticulum membrane. This is an uncharacterized protein from Saccharomyces cerevisiae (strain ATCC 204508 / S288c) (Baker's yeast).